Consider the following 142-residue polypeptide: Large ribosomal subunit protein uL11 (142 aa).

Belongs to the universal ribosomal protein uL11 family. As to quaternary structure, part of the ribosomal stalk of the 50S ribosomal subunit. Interacts with L10 and the large rRNA to form the base of the stalk. L10 forms an elongated spine to which L12 dimers bind in a sequential fashion forming a multimeric L10(L12)X complex. In terms of processing, one or more lysine residues are methylated.

Functionally, forms part of the ribosomal stalk which helps the ribosome interact with GTP-bound translation factors. In Serratia proteamaculans (strain 568), this protein is Large ribosomal subunit protein uL11.